The chain runs to 189 residues: MTEYKLVVVGAGGVGKSALTIQLIQNHFVDEYDPTIEDSYRKQVVIDGETCLLDILDTAGQEEYSAMRDQYMRTGEGFLLVFAVNSAKSFEDIGTYREQIKRVKDAEEVPMVLVGNKCDLPSWNVQNEQAREVAKQYGIPYIETSAKTRMGVDDAFYTLVREIRKDKDNKGRKGRKLNKPNRRFKCKML.

Residue 10–17 (GAGGVGKS) coordinates GTP. The Effector region motif lies at 32–40 (YDPTIEDSY). GTP-binding positions include 57–61 (DTAGQ) and 116–119 (NKCD). Cys186 bears the Cysteine methyl ester mark. Cys186 is lipidated: S-geranylgeranyl cysteine. Residues 187–189 (KML) constitute a propeptide, removed in mature form.

This sequence belongs to the small GTPase superfamily. Ras family.

The protein localises to the cell membrane. It catalyses the reaction GTP + H2O = GDP + phosphate + H(+). Alternates between an inactive form bound to GDP and an active form bound to GTP. Activated by a guanine nucleotide-exchange factor (GEF) and inactivated by a GTPase-activating protein (GAP). Ras proteins bind GDP/GTP and possess intrinsic GTPase activity. Plays a role in eye development by regulating cell growth, survival of postmitotic ommatidial cells and differentiation of photoreceptor cells. During larval development, mediates Ptth/tor signaling leading to the production of ecdysone, a hormone required for the initiation of metamorphosis. The sequence is that of Ras-like protein 1 from Drosophila willistoni (Fruit fly).